The sequence spans 76 residues: Small ribosomal subunit protein bS18 (76 aa).

Belongs to the bacterial ribosomal protein bS18 family. In terms of assembly, part of the 30S ribosomal subunit. Forms a tight heterodimer with protein bS6.

Binds as a heterodimer with protein bS6 to the central domain of the 16S rRNA, where it helps stabilize the platform of the 30S subunit. The sequence is that of Small ribosomal subunit protein bS18 from Marinomonas sp. (strain MWYL1).